We begin with the raw amino-acid sequence, 389 residues long: Abscission/NoCut checkpoint regulator (389 aa).

Residues 1-58 form an FYVE-type zinc finger; it reads MESRCYGCAVKFTLFKKEYGCKNCGRAFCNGCLSFSALVPRAGNTQQKVCKQCHTILT. Zn(2+) contacts are provided by cysteine 5, cysteine 8, cysteine 21, cysteine 24, cysteine 29, cysteine 32, cysteine 50, and cysteine 53. Serine 69 is subject to Phosphoserine. Positions 99–112 match the MIM1-A motif; that stretch reads DQAIAERLARLRQE. Lysine 132 participates in a covalent cross-link: Glycyl lysine isopeptide (Lys-Gly) (interchain with G-Cter in SUMO2). 2 disordered regions span residues 158–177 and 204–227; these read PSHT…QAQQ and QNDL…SQSL. The span at 167-177 shows a compositional bias: low complexity; sequence QAPDTRTQAQQ. Over residues 214–226 the composition is skewed to polar residues; it reads SQRTNSQGQASQS. Position 219 is a phosphoserine (serine 219). A coiled-coil region spans residues 226-261; the sequence is SLEEEKYKLLAEAAVELQEENTRQERILALAKRLAV. Residues 252–265 carry the MIM1-B motif; it reads ILALAKRLAVLKGQ. Serine 280 carries the phosphoserine modification.

In terms of assembly, interacts (via MIM1-B) with VPS4A; interaction takes place at the midbody ring following cytokinesis checkpoint activation.

The protein resides in the cytoplasm. It localises to the cytoskeleton. Its subcellular location is the microtubule organizing center. The protein localises to the centrosome. It is found in the cleavage furrow. The protein resides in the midbody. It localises to the midbody ring. Key regulator of abscission step in cytokinesis: part of the cytokinesis checkpoint, a process required to delay abscission to prevent both premature resolution of intercellular chromosome bridges and accumulation of DNA damage. Together with CHMP4C, required to retain abscission-competent VPS4 (VPS4A and/or VPS4B) at the midbody ring until abscission checkpoint signaling is terminated at late cytokinesis. Deactivation of AURKB results in dephosphorylation of CHMP4C followed by its dissociation from ZFYVE19/ANCHR and VPS4 and subsequent abscission. The chain is Abscission/NoCut checkpoint regulator (Zfyve19) from Mus musculus (Mouse).